Consider the following 292-residue polypeptide: ATP synthase gamma chain (292 aa).

This sequence belongs to the ATPase gamma chain family. F-type ATPases have 2 components, CF(1) - the catalytic core - and CF(0) - the membrane proton channel. CF(1) has five subunits: alpha(3), beta(3), gamma(1), delta(1), epsilon(1). CF(0) has three main subunits: a, b and c.

It localises to the cell inner membrane. Its function is as follows. Produces ATP from ADP in the presence of a proton gradient across the membrane. The gamma chain is believed to be important in regulating ATPase activity and the flow of protons through the CF(0) complex. The polypeptide is ATP synthase gamma chain (Chlorobaculum parvum (strain DSM 263 / NCIMB 8327) (Chlorobium vibrioforme subsp. thiosulfatophilum)).